The primary structure comprises 569 residues: Probable protein phosphatase 2C BIPP2C1 (569 aa).

Disordered regions lie at residues 166–212 and 251–279; these read GSSN…SSKV and SLDDSEASDGSTTQDFDTDVETESSGSSI. Positions 174–183 are enriched in low complexity; it reads SEVGVESECG. In terms of domain architecture, PPM-type phosphatase spans 329–564; sequence AAMLPHPSKV…DDVTVVVSVV (236 aa). Residues aspartate 358, glycine 359, aspartate 488, and aspartate 555 each coordinate Mn(2+).

This sequence belongs to the PP2C family. Mg(2+) serves as cofactor. It depends on Mn(2+) as a cofactor.

The catalysed reaction is O-phospho-L-seryl-[protein] + H2O = L-seryl-[protein] + phosphate. It catalyses the reaction O-phospho-L-threonyl-[protein] + H2O = L-threonyl-[protein] + phosphate. Functionally, may play a role in responses to biotic and abiotic stresses. The sequence is that of Probable protein phosphatase 2C BIPP2C1 (BIPP2C1) from Oryza sativa subsp. indica (Rice).